Here is a 570-residue protein sequence, read N- to C-terminus: BRICHOS domain-containing protein C09F5.1 (570 aa).

At 1–288 (MVVEQIEVIE…YTPELLRSLC (288 aa)) the chain is on the cytoplasmic side. 2 stretches are compositionally biased toward polar residues: residues 93-107 (SGAT…SGDS) and 228-246 (TSTL…SLVS). Disordered stretches follow at residues 93–116 (SGAT…GADR) and 218–248 (SSWD…VSRE). A helical membrane pass occupies residues 289-309 (CILLLLLLLLFLMFIIFNAIF). At 310-570 (NRYAVSEFLL…RKSINNATLV (261 aa)) the chain is on the extracellular side. Positions 369 to 461 (TAVDFNTGYV…IDDCEGAQWY (93 aa)) constitute a BRICHOS domain. Cysteines 395 and 455 form a disulfide.

It localises to the membrane. The polypeptide is BRICHOS domain-containing protein C09F5.1 (Caenorhabditis elegans).